Here is a 315-residue protein sequence, read N- to C-terminus: Calcium homeostasis modulator protein 4 (315 aa).

Topologically, residues 1-14 are cytoplasmic; that stretch reads MSPDLNCISSSLLR. A helical transmembrane segment spans residues 15–37; it reads SEPCINSLIAILTVCGQQLFSSY. The Extracellular portion of the chain corresponds to 38-48; the sequence is TFSCPCQVGKN. Cystine bridges form between cysteine 41-cysteine 132 and cysteine 43-cysteine 163. The helical transmembrane segment at 49 to 71 threads the bilayer; the sequence is FYYGSAFLVVPALILLIAGYALR. Residues 72–104 lie on the Cytoplasmic side of the membrane; it reads GQMWTVASEYCCCSCTPPYRRSSPLERRLACLM. A helical transmembrane segment spans residues 105-130; it reads FFDITGRALVAPLTWLTVTLLTGTYY. Over 131–184 the chain is Extracellular; that stretch reads ECAASEFASVDQYPMFANVTPSKREEMLAGFPCYTSAPSDVIPIRDEVALLHRY. Residues 185–208 traverse the membrane as a helical segment; it reads QSQMLGWILVVLATIALLLSKCLA. Topologically, residues 209-315 are cytoplasmic; the sequence is RCCSPLTSLQ…DRQEGIEMKP (107 aa).

Belongs to the CALHM family. As to quaternary structure, oligomerizes to form decameric and undecameric channels. Two hemichannels can assemble in a tail-to-tail manner to form a gap junction.

It localises to the cell membrane. May assemble to form gap junction channel-like structures involved in intercellular communication. Channel gating and ion conductance are likely regulated by membrane lipids rather than by membrane depolarization or extracellular calcium levels. This Mus musculus (Mouse) protein is Calcium homeostasis modulator protein 4.